The primary structure comprises 87 residues: Phosphocarrier protein HPr (87 aa).

The HPr domain occupies 2-87; the sequence is ASKDFHIVAE…NETMTKEGLA (86 aa). Residue His-15 is the Pros-phosphohistidine intermediate of the active site. Residue Ser-46 is modified to Phosphoserine; by HPrK/P.

The protein belongs to the HPr family.

It localises to the cytoplasm. Phosphorylation on Ser-46 inhibits the phosphoryl transfer from enzyme I to HPr. Its function is as follows. General (non sugar-specific) component of the phosphoenolpyruvate-dependent sugar phosphotransferase system (sugar PTS). This major carbohydrate active-transport system catalyzes the phosphorylation of incoming sugar substrates concomitantly with their translocation across the cell membrane. The phosphoryl group from phosphoenolpyruvate (PEP) is transferred to the phosphoryl carrier protein HPr by enzyme I. Phospho-HPr then transfers it to the PTS EIIA domain. Functionally, P-Ser-HPr interacts with the catabolite control protein A (CcpA), forming a complex that binds to DNA at the catabolite response elements cre, operator sites preceding a large number of catabolite-regulated genes. Thus, P-Ser-HPr is a corepressor in carbon catabolite repression (CCR), a mechanism that allows bacteria to coordinate and optimize the utilization of available carbon sources. P-Ser-HPr also plays a role in inducer exclusion, in which it probably interacts with several non-PTS permeases and inhibits their transport activity. This Streptococcus mutans serotype c (strain ATCC 700610 / UA159) protein is Phosphocarrier protein HPr (ptsH).